The sequence spans 164 residues: DNA-binding protein inhibitor ID-1 (164 aa).

The 53-residue stretch at 46–98 folds into the bHLH domain; sequence LPALLDEQQVNVLLYDMNGCYSRLKELVPTLPQNRKVSKVEILQHVIDYIRDL. Residues 91-104 carry the Nuclear export signal motif; it reads VIDYIRDLQLELNS.

In terms of assembly, heterodimer with other HLH proteins. Interacts with COPS5, IFI204, GATA4, NKX2-5, CLOCK and BMAL1. Isoform Short can form homodimers. Phosphorylated in vitro by PKA and PKC.

The protein localises to the cytoplasm. Its subcellular location is the nucleus. Its function is as follows. Transcriptional regulator (lacking a basic DNA binding domain) which negatively regulates the basic helix-loop-helix (bHLH) transcription factors by forming heterodimers and inhibiting their DNA binding and transcriptional activity. Implicated in regulating a variety of cellular processes, including cellular growth, senescence, differentiation, apoptosis, angiogenesis, and neoplastic transformation. Inhibits skeletal muscle and cardiac myocyte differentiation. Regulates the circadian clock by repressing the transcriptional activator activity of the CLOCK-BMAL1 heterodimer. This is DNA-binding protein inhibitor ID-1 (Id1) from Rattus norvegicus (Rat).